A 120-amino-acid chain; its full sequence is uncharacterized protein (120 aa).

This is an uncharacterized protein from Allochromatium vinosum (strain ATCC 17899 / DSM 180 / NBRC 103801 / NCIMB 10441 / D) (Chromatium vinosum).